The chain runs to 482 residues: MVQLNQNFINTIAQELPAHLSMDDFIAACSRPLRRSIRVNTLKTSSEDFKRLMQPKGWTFEPIPWCEDGFWISYDEEEQLGNALEHIQGLFYIQEASSMLPPTALFTPNADWQCVLDLASAPGSKTTQMAALMNNQGLLVANEYSASRVKVLHANVLRMGASHCALTHFDGRVFGEYLYESFDAVLIDAPCGGEGTVRKDADALKSWSLDEVIEISETQKALIESAFLALKPGGSLVYSTCTLNRHENQGVCEYLQQTYGDAVQFESLSQLFDGAEKATTPEGFLHVWPQIYDSEGFFVAKLTKTRSVPRLQPEPKLQKNFPFTEASAKQAKAIQAYFADDLGIELPDDLIMVRDDEFWLFPHEFRDFIGKMRFQRIGVKLADHSKHGFKVRHEAIIALAGKALKAGAKNGAKVVEVSDEQAKEYLMGRDIPLDTAGKAQGEVIVCYGGAPLGMAKHLGNKLKNSLPRDLVKDKVLLLPPQA.

Residues 119-125, glutamate 143, aspartate 170, and aspartate 188 each bind S-adenosyl-L-methionine; that span reads ASAPGSK. The active-site Nucleophile is cysteine 241.

It belongs to the class I-like SAM-binding methyltransferase superfamily. RsmB/NOP family.

The protein resides in the cytoplasm. The catalysed reaction is cytidine(1407) in 16S rRNA + S-adenosyl-L-methionine = 5-methylcytidine(1407) in 16S rRNA + S-adenosyl-L-homocysteine + H(+). Its function is as follows. Specifically methylates the cytosine at position 1407 (m5C1407) of 16S rRNA. This is Ribosomal RNA small subunit methyltransferase F from Shewanella sp. (strain ANA-3).